We begin with the raw amino-acid sequence, 62 residues long: Large ribosomal subunit protein bL32 (62 aa).

Over residues Met-1 to Ser-19 the composition is skewed to basic residues. The tract at residues Met-1 to Ser-20 is disordered.

Belongs to the bacterial ribosomal protein bL32 family.

The polypeptide is Large ribosomal subunit protein bL32 (Finegoldia magna (strain ATCC 29328 / DSM 20472 / WAL 2508) (Peptostreptococcus magnus)).